The sequence spans 235 residues: Myelin protein zero-like protein 3 (235 aa).

A signal peptide spans 1–31 (MQQRGAAGSRGCALFPLLGVLFFQGVYIVFS). Positions 32-148 (LEIRADAHVR…NIPMTELTVT (117 aa)) constitute an Ig-like V-type domain. Residues 32-158 (LEIRADAHVR…ERGFGTMLSS (127 aa)) are Extracellular-facing. Cys-52 and Cys-128 are joined by a disulfide. Asn-123 carries an N-linked (GlcNAc...) asparagine glycan. A helical membrane pass occupies residues 159-179 (VALLSILVFVPSAVVVALLLV). The Cytoplasmic portion of the chain corresponds to 180 to 235 (RMGRKAAGLKKRSRSGYKKSSIEVSDDTDQEEEEACMARLCVRCAECLDSDYEETY).

Belongs to the myelin P0 protein family.

It is found in the membrane. Mediates homophilic cell-cell adhesion. In Homo sapiens (Human), this protein is Myelin protein zero-like protein 3 (MPZL3).